The following is a 174-amino-acid chain: N5-carboxyaminoimidazole ribonucleotide mutase (174 aa).

Residues serine 16, aspartate 19, and arginine 46 each coordinate substrate.

It belongs to the AIR carboxylase family. Class I subfamily.

It catalyses the reaction 5-carboxyamino-1-(5-phospho-D-ribosyl)imidazole + H(+) = 5-amino-1-(5-phospho-D-ribosyl)imidazole-4-carboxylate. It participates in purine metabolism; IMP biosynthesis via de novo pathway; 5-amino-1-(5-phospho-D-ribosyl)imidazole-4-carboxylate from 5-amino-1-(5-phospho-D-ribosyl)imidazole (N5-CAIR route): step 2/2. Catalyzes the conversion of N5-carboxyaminoimidazole ribonucleotide (N5-CAIR) to 4-carboxy-5-aminoimidazole ribonucleotide (CAIR). The protein is N5-carboxyaminoimidazole ribonucleotide mutase of Mycobacterium tuberculosis (strain CDC 1551 / Oshkosh).